The primary structure comprises 77 residues: Protein RADIALIS-like 4 (77 aa).

The SANT domain maps to 6–61; sequence MSTSSWTAREDKQFEMALAKFDKDTPDRWQKIARAVGGKSTEEVKRHYELLLRDVN.

In terms of tissue distribution, expressed just outside the vascular bundles in the rosette stem and the leaf traces. Not detected in floral primordia.

It localises to the nucleus. Its function is as follows. Probable transcription factor. The chain is Protein RADIALIS-like 4 (RL4) from Arabidopsis thaliana (Mouse-ear cress).